The sequence spans 103 residues: Small ribosomal subunit protein uS10 (103 aa).

The protein belongs to the universal ribosomal protein uS10 family. Part of the 30S ribosomal subunit.

Its function is as follows. Involved in the binding of tRNA to the ribosomes. The polypeptide is Small ribosomal subunit protein uS10 (Baumannia cicadellinicola subsp. Homalodisca coagulata).